Consider the following 232-residue polypeptide: Large ribosomal subunit protein uL1 (232 aa).

This sequence belongs to the universal ribosomal protein uL1 family. Part of the 50S ribosomal subunit.

Functionally, binds directly to 23S rRNA. The L1 stalk is quite mobile in the ribosome, and is involved in E site tRNA release. Protein L1 is also a translational repressor protein, it controls the translation of the L11 operon by binding to its mRNA. This Bacillus pumilus (strain SAFR-032) protein is Large ribosomal subunit protein uL1.